The primary structure comprises 259 residues: UPF0246 protein PA14_18590 (259 aa).

Belongs to the UPF0246 family.

This Pseudomonas aeruginosa (strain UCBPP-PA14) protein is UPF0246 protein PA14_18590.